The following is a 253-amino-acid chain: Ribonuclease HII (253 aa).

The RNase H type-2 domain maps to 70–253; it reads DLIAGVDEVG…KTFAPIKDIL (184 aa). 3 residues coordinate a divalent metal cation: aspartate 76, glutamate 77, and aspartate 168.

It belongs to the RNase HII family. The cofactor is Mn(2+). Requires Mg(2+) as cofactor.

It localises to the cytoplasm. It catalyses the reaction Endonucleolytic cleavage to 5'-phosphomonoester.. Functionally, endonuclease that specifically degrades the RNA of RNA-DNA hybrids. This Leuconostoc mesenteroides subsp. mesenteroides (strain ATCC 8293 / DSM 20343 / BCRC 11652 / CCM 1803 / JCM 6124 / NCDO 523 / NBRC 100496 / NCIMB 8023 / NCTC 12954 / NRRL B-1118 / 37Y) protein is Ribonuclease HII.